Consider the following 248-residue polypeptide: Homeobox protein BarH-like 1 (248 aa).

Positions 135–194 (GRRSRTVFTELQLMGLEKRFEKQKYLSTPDRIDLAESLGLSQLQVKTWYQNRRMKWKKIV) form a DNA-binding region, homeobox. The interval 197–248 (GGGLESPTKPKGRPKKNSIPTSEQLSEQERTREADRLSDGGASSLSDANQEE) is disordered. Residues 223–234 (EQERTREADRLS) are compositionally biased toward basic and acidic residues. Residues 237 to 248 (GASSLSDANQEE) are compositionally biased toward polar residues.

This sequence belongs to the BAR homeobox family.

It is found in the nucleus. In terms of biological role, transcription factor, is involved in craniofacial development, and in stomach organogenesis. This is Homeobox protein BarH-like 1 (barx1) from Danio rerio (Zebrafish).